Reading from the N-terminus, the 352-residue chain is MDYQVSSPTYDIDYNTSEPCQKINVKQIAARLLPLLYSLVFIFGFVGNILVVLILINCKRLKSMTDIYLLNLAISDLLFLLTVPFWAHYAAAQWDFGNTMCQLLTGLYFIGFFSGIFFIILLTIDRYLAIVHAVFALKARTVTFGVVTSVITWVVAVFASLPRIIFTRSQREGLHYTCSSHFPYSQYQFWKNFQTLKIVILGLVLPLLVMVICYSGILKTLLRCRNEKKRHRAVRLIFTIMIVYFLFWAPYNIVLLLNTFQEFFGLNNCSSSNRLDQAMQVTETLGMTHCCINPIIYAFVGEKFRNYLLVFFQKHIAKRFCKCCSIFQQEAPERASSVYTRSTGEQEISVGL.

The Extracellular portion of the chain corresponds to 1-30 (MDYQVSSPTYDIDYNTSEPCQKINVKQIAA). Y3 is subject to Sulfotyrosine. O-linked (GalNAc...) serine glycans are attached at residues S6 and S7. Sulfotyrosine occurs at positions 10 and 14. Disulfide bonds link C20/C269 and C101/C178. Residues 31–58 (RLLPLLYSLVFIFGFVGNILVVLILINC) form a helical membrane-spanning segment. Residues 59–68 (KRLKSMTDIY) lie on the Cytoplasmic side of the membrane. Residues 69–89 (LLNLAISDLLFLLTVPFWAHY) form a helical membrane-spanning segment. The Extracellular segment spans residues 90-102 (AAAQWDFGNTMCQ). The chain crosses the membrane as a helical span at residues 103–124 (LLTGLYFIGFFSGIFFIILLTI). The Cytoplasmic segment spans residues 125–141 (DRYLAIVHAVFALKART). The chain crosses the membrane as a helical span at residues 142–166 (VTFGVVTSVITWVVAVFASLPRIIF). Over 167–198 (TRSQREGLHYTCSSHFPYSQYQFWKNFQTLKI) the chain is Extracellular. Residues 199–218 (VILGLVLPLLVMVICYSGIL) traverse the membrane as a helical segment. Topologically, residues 219–235 (KTLLRCRNEKKRHRAVR) are cytoplasmic. A helical membrane pass occupies residues 236–260 (LIFTIMIVYFLFWAPYNIVLLLNTF). Residues 261–277 (QEFFGLNNCSSSNRLDQ) are Extracellular-facing. A helical membrane pass occupies residues 278–301 (AMQVTETLGMTHCCINPIIYAFVG). Residues 302–352 (EKFRNYLLVFFQKHIAKRFCKCCSIFQQEAPERASSVYTRSTGEQEISVGL) lie on the Cytoplasmic side of the membrane. Residues C321, C323, and C324 are each lipidated (S-palmitoyl cysteine). S336, S337, S342, and S349 each carry phosphoserine; by BARK1.

This sequence belongs to the G-protein coupled receptor 1 family. In terms of assembly, interacts with PRAF2. Efficient ligand binding to CCL3/MIP-1alpha and CCL4/MIP-1beta requires sulfation, O-glycosylation and sialic acid modifications. Glycosylation on Ser-6 is required for efficient binding of CCL4. Interacts with GRK2. Interacts with ARRB1 and ARRB2. Interacts with CNIH4. Interacts with S100A4; this interaction stimulates T-lymphocyte chemotaxis. Post-translationally, sulfated on at least 2 of the N-terminal tyrosines. Sulfation is required for efficient binding of the chemokines, CCL3 and CCL4. In terms of processing, palmitoylation in the C-terminal is important for cell surface expression. Phosphorylation on serine residues in the C-terminal is stimulated by binding CC chemokines especially by APO-RANTES. Post-translationally, O-glycosylated, but not N-glycosylated. Ser-6 appears to be the major site even if Ser-7 may be also O-glycosylated. Also sialylated glycans present which contribute to chemokine binding. Thr-16 and Ser-17 may also be glycosylated and, if so, with small moieties such as a T-antigen.

The protein resides in the cell membrane. Functionally, receptor for a number of inflammatory CC-chemokines including CCL3/MIP-1-alpha, CCL4/MIP-1-beta and RANTES and subsequently transduces a signal by increasing the intracellular calcium ion level. May play a role in the control of granulocytic lineage proliferation or differentiation. Participates in T-lymphocyte migration to the infection site by acting as a chemotactic receptor. The sequence is that of C-C chemokine receptor type 5 (CCR5) from Cercopithecus cephus (Moustached monkey).